A 616-amino-acid chain; its full sequence is Formin-binding protein 1 (616 aa).

The segment at 1–79 (MSWGTELWDQ…CKAFLSTLNE (79 aa)) is required for self-association and induction of membrane tubulation. In terms of domain architecture, F-BAR spans 1 to 264 (MSWGTELWDQ…AAESIDQKND (264 aa)). Positions 1–334 (MSWGTELWDQ…KKNKLMSLLT (334 aa)) are interaction with microtubules. An N6-acetyllysine mark is found at Lys-66 and Lys-110. A coiled-coil region spans residues 67 to 259 (YTACKAFLST…DGIVKAAESI (193 aa)). The interval 251 to 616 (GIVKAAESID…VYLDKNAKGS (366 aa)) is required for self-association and induction of membrane tubulation. Disordered stretches follow at residues 280-314 (GDIE…RFGG) and 332-366 (LLTS…KEPL). A phosphoserine mark is found at Ser-296 and Ser-299. A compositionally biased stretch (pro residues) spans 337-346 (HQPPPPPPAS). Residues Ser-348 and Ser-358 each carry the phosphoserine modification. Positions 398 to 490 (PEDFSNFPPE…VEGRLPARSE (93 aa)) form a coiled coil. An interaction with RND2 region spans residues 399–551 (EDFSNFPPEQ…FDDEEPLPAI (153 aa)). An REM-1 domain is found at 403-480 (NFPPEQRRKK…AQKFEAWLAE (78 aa)). The segment at 487–531 (ARSEQARRQSGLYDGQTHQTVTNCAQDRESPDGSYTEEQSQESEH) is disordered. Positions 494–616 (RQSGLYDGQT…VYLDKNAKGS (123 aa)) are interaction with PDE6G. Ser-496 carries the post-translational modification Phosphoserine. Residue Tyr-499 is modified to Phosphotyrosine. Over residues 502–511 (QTHQTVTNCA) the composition is skewed to polar residues. Residues 513 to 616 (DRESPDGSYT…VYLDKNAKGS (104 aa)) form a required for interaction with TNKS region. The residue at position 520 (Ser-520) is a Phosphoserine. Residues 534 to 616 (LAPDFDDEFD…VYLDKNAKGS (83 aa)) form an interaction with DNM1 and DNM3 region. Residues 549-610 (PAIGTCKALY…PTSYVEVYLD (62 aa)) form the SH3 domain. The interaction with ARHGAP17, DAAM1, DIAPH1 and DIAPH2 stretch occupies residues 549–616 (PAIGTCKALY…VYLDKNAKGS (68 aa)). Residues 552–608 (GTCKALYTFEGQNEGTISVVEGETLSVIEEDKGDGWTRIRRNEDEEGYVPTSYVEVY) form an interaction with DNM2 and WASL region. An interaction with FASLG region spans residues 552–609 (GTCKALYTFEGQNEGTISVVEGETLSVIEEDKGDGWTRIRRNEDEEGYVPTSYVEVYL).

The protein belongs to the FNBP1 family. Homodimerizes, the dimers can polymerize end-to-end to form filamentous structures. Interacts specifically with GTP-bound RND2 and CDC42. Interacts with AKAP9, ARHGAP17, DAAM1, DIAPH1, DIAPH2, DNM1, DNM2, DNM3, FASLG/FASL, microtubules, PDE6G, SNX2 and WASL/N-WASP. May interact with TNKS. As to expression, expressed in brain and testis.

Its subcellular location is the cytoplasm. The protein resides in the cytoskeleton. The protein localises to the cell cortex. It is found in the lysosome. It localises to the cytoplasmic vesicle. Its subcellular location is the cell membrane. The protein resides in the membrane. The protein localises to the clathrin-coated pit. Required to coordinate membrane tubulation with reorganization of the actin cytoskeleton during the late stage of clathrin-mediated endocytosis. Binds to lipids such as phosphatidylinositol 4,5-bisphosphate and phosphatidylserine and promotes membrane invagination and the formation of tubules. Also enhances actin polymerization via the recruitment of WASL/N-WASP, which in turn activates the Arp2/3 complex. Actin polymerization may promote the fission of membrane tubules to form endocytic vesicles. May act as a link between RND2 signaling and regulation of the actin cytoskeleton. May be required for the lysosomal retention of FASLG/FASL. In Mus musculus (Mouse), this protein is Formin-binding protein 1 (Fnbp1).